Consider the following 446-residue polypeptide: Exodeoxyribonuclease 7 large subunit (446 aa).

This sequence belongs to the XseA family. As to quaternary structure, heterooligomer composed of large and small subunits.

The protein localises to the cytoplasm. The enzyme catalyses Exonucleolytic cleavage in either 5'- to 3'- or 3'- to 5'-direction to yield nucleoside 5'-phosphates.. Bidirectionally degrades single-stranded DNA into large acid-insoluble oligonucleotides, which are then degraded further into small acid-soluble oligonucleotides. In Acholeplasma laidlawii (strain PG-8A), this protein is Exodeoxyribonuclease 7 large subunit.